The following is a 111-amino-acid chain: Small ribosomal subunit protein uS17 (111 aa).

Belongs to the universal ribosomal protein uS17 family. As to quaternary structure, part of the 30S ribosomal subunit.

Its function is as follows. One of the primary rRNA binding proteins, it binds specifically to the 5'-end of 16S ribosomal RNA. The polypeptide is Small ribosomal subunit protein uS17 (Archaeoglobus fulgidus (strain ATCC 49558 / DSM 4304 / JCM 9628 / NBRC 100126 / VC-16)).